The chain runs to 361 residues: Zinc transporter ZIP13 (361 aa).

Residues 1 to 6 (MPGCPC) lie on the Lumenal side of the membrane. The chain crosses the membrane as a helical span at residues 7-27 (PGCGMAGQRLLFLTVLALELL). At 28–68 (ERAGGSQPALRSLGAAAACRLDSKESESWGALLSGERLDTW) the chain is on the cytoplasmic side. The helical transmembrane segment at 69–89 (ICSLLGSLMVGLSGVFPLLVI) threads the bilayer. At 90–108 (PLEMGTMLQSEAGAWRLKQ) the chain is on the lumenal side. The helical transmembrane segment at 109–129 (LLSFALGGLLGNVFLHLLPEA) threads the bilayer. Residues 130–150 (WAYTCNISPGVEGQSLQRQQQ) lie on the Cytoplasmic side of the membrane. A helical transmembrane segment spans residues 151–171 (LGLWVIAGFLTFLALEKMFLN). The Lumenal portion of the chain corresponds to 172 to 233 (CKEEDPSQAP…TIDNFTHGLA (62 aa)). The helical transmembrane segment at 234 to 254 (VAASFLVSKKIGLLTTMAILL) threads the bilayer. Positions 255-260 (HEIPHE) match the XEXPHE-motif motif. Residues 255–276 (HEIPHEVGDFAILLRAGFDRWT) lie on the Cytoplasmic side of the membrane. A helical transmembrane segment spans residues 277–297 (AAKLQFSTALGGLLGACFAIC). Residues 298–307 (TQSPKGVEET) lie on the Lumenal side of the membrane. The helical transmembrane segment at 308 to 328 (VVWTLPFTSGGFLYVALVNVL) threads the bilayer. Over 329-340 (PDLLEEDDPWHL) the chain is Cytoplasmic. The chain crosses the membrane as a helical span at residues 341–361 (NPPLPTGTPCSRCCCSAPVSW).

The protein belongs to the ZIP transporter (TC 2.A.5) family. In terms of assembly, homodimer.

It localises to the golgi apparatus membrane. The protein localises to the cytoplasmic vesicle membrane. Its subcellular location is the endoplasmic reticulum membrane. The catalysed reaction is Zn(2+)(in) = Zn(2+)(out). In terms of biological role, functions as a zinc transporter transporting Zn(2+) from the Golgi apparatus to the cytosol and thus influences the zinc level at least in areas of the cytosol. May regulate beige adipocyte differentiation. The polypeptide is Zinc transporter ZIP13 (Rattus norvegicus (Rat)).